A 313-amino-acid polypeptide reads, in one-letter code: Peptidyl-prolyl cis-trans isomerase 9 (313 aa).

The PPIase cyclophilin-type domain maps to 9–174 (FLDMALDEKP…AKVRIFNSGE (166 aa)). Composition is skewed to basic and acidic residues over residues 216 to 230 (EERE…ESSR) and 253 to 269 (RGDR…KDDF). Disordered regions lie at residues 216-274 (EERE…IAVR) and 288-313 (TPEH…DLQP).

Belongs to the cyclophilin-type PPIase family.

The catalysed reaction is [protein]-peptidylproline (omega=180) = [protein]-peptidylproline (omega=0). PPIases accelerate the folding of proteins. It catalyzes the cis-trans isomerization of proline imid ic peptide bonds in oligopeptides. Thought to function as a catalyst in the folding and modification of cuticle collagens. The polypeptide is Peptidyl-prolyl cis-trans isomerase 9 (Caenorhabditis briggsae).